The primary structure comprises 670 residues: DNA ligase (670 aa).

NAD(+)-binding positions include 34–38 (DAEYD), 84–85 (SL), 116–119 (EHKV), Arg-139, Glu-174, Tyr-226, Lys-291, and Lys-315. Lys-118 acts as the N6-AMP-lysine intermediate in catalysis. Zn(2+)-binding residues include Cys-409, Cys-412, Cys-425, and Cys-430. The BRCT domain maps to 586 to 670 (EVSDLLSGLT…LKEKGAPVPA (85 aa)).

This sequence belongs to the NAD-dependent DNA ligase family. LigA subfamily. Mg(2+) is required as a cofactor.

The catalysed reaction is NAD(+) + (deoxyribonucleotide)n-3'-hydroxyl + 5'-phospho-(deoxyribonucleotide)m = (deoxyribonucleotide)n+m + AMP + beta-nicotinamide D-nucleotide.. Functionally, DNA ligase that catalyzes the formation of phosphodiester linkages between 5'-phosphoryl and 3'-hydroxyl groups in double-stranded DNA using NAD as a coenzyme and as the energy source for the reaction. It is essential for DNA replication and repair of damaged DNA. The chain is DNA ligase from Thermus filiformis.